A 470-amino-acid chain; its full sequence is ATP synthase subunit beta (470 aa).

An ATP-binding site is contributed by 158–165 (GGAGVGKT).

It belongs to the ATPase alpha/beta chains family. F-type ATPases have 2 components, CF(1) - the catalytic core - and CF(0) - the membrane proton channel. CF(1) has five subunits: alpha(3), beta(3), gamma(1), delta(1), epsilon(1). CF(0) has three main subunits: a(1), b(2) and c(9-12). The alpha and beta chains form an alternating ring which encloses part of the gamma chain. CF(1) is attached to CF(0) by a central stalk formed by the gamma and epsilon chains, while a peripheral stalk is formed by the delta and b chains.

It localises to the cell membrane. The enzyme catalyses ATP + H2O + 4 H(+)(in) = ADP + phosphate + 5 H(+)(out). Its function is as follows. Produces ATP from ADP in the presence of a proton gradient across the membrane. The catalytic sites are hosted primarily by the beta subunits. In Shouchella clausii (strain KSM-K16) (Alkalihalobacillus clausii), this protein is ATP synthase subunit beta.